The primary structure comprises 595 residues: GPI mannosyltransferase 3 (595 aa).

10 consecutive transmembrane segments (helical) span residues 58 to 78, 85 to 105, 128 to 148, 185 to 207, 212 to 232, 235 to 255, 260 to 280, 289 to 309, 319 to 339, and 413 to 433; these read YAFPMLFEMSYYVAWILGVAT, LAHATALCGAVVPSGAAGVAA, GPRVVMAAVAACGEFYSVLLV, FFATRTFINSFEMTLTAVALYHW, GLDVGSLGFSASLAVAAFACL, PTNVLIWAVLGLFLVLNLVRS, LLLTLVAKVAAAGALAVCANI, GVLLPLLRFIEFNVTTPLAAF, LLQSVPLIVGYALPFFVGALL, and VQSLLYVLPVLSITAALVLNT.

This sequence belongs to the glycosyltransferase 22 family. PIGB subfamily.

The protein resides in the endoplasmic reticulum membrane. The protein operates within glycolipid biosynthesis; glycosylphosphatidylinositol-anchor biosynthesis. Functionally, mannosyltransferase involved in glycosylphosphatidylinositol-anchor biosynthesis. Transfers the third mannose to Man2-GlcN-acyl-PI during GPI precursor assembly. This Eremothecium gossypii (strain ATCC 10895 / CBS 109.51 / FGSC 9923 / NRRL Y-1056) (Yeast) protein is GPI mannosyltransferase 3 (GPI10).